The chain runs to 438 residues: MVQWKRLCQLHYLWALGCYMLLATVALKLSFRLKCDSDHLGLESRESQSQYCRNILYNFLKLPAKRSINCSGVTRGDQEAVLQAILNNLEVKKKREPFTDTHYLSLTRDCEHFKAERKFIQFPLSKEEVEFPIAYSMVIHEKIENFERLLRAVYAPQNIYCVHVDEKSPETFKEAVKAIISCFPNVFIASKLVRVVYASWSRVQADLNCMEDLLQSSVPWKYFLNTCGTDFPIKSNAEMVQALKMLNGRNSMESEVPPKHKETRWKYHFEVVRDTLHLTNKKKDPPPYNLTMFTGNAYIVASRDFVQHVLKNPKSQQLIEWVKDTYSPDEHLWATLQRARWMPGSVPNHPKYDISDMTSIARLVKWQGHEGDIDKGAPYAPCSGIHQRAICVYGAGDLNWMLQNHHLLANKFDPKVDDNALQCLEEYLRYKAIYGTEL.

Residues 1–6 lie on the Cytoplasmic side of the membrane; sequence MVQWKR. A helical; Signal-anchor for type II membrane protein membrane pass occupies residues 7-26; the sequence is LCQLHYLWALGCYMLLATVA. At 27–438 the chain is on the lumenal side; the sequence is LKLSFRLKCD…RYKAIYGTEL (412 aa). 4 disulfides stabilise this stretch: Cys-70-Cys-227, Cys-161-Cys-382, Cys-182-Cys-209, and Cys-391-Cys-423. Asn-289 is a glycosylation site (N-linked (GlcNAc...) asparagine).

This sequence belongs to the glycosyltransferase 14 family. Post-translationally, N-glycosylated. Primarily expressed in mucus-secreting tissues. Expressed in colon, kidney, small intestine, trachea, and stomach, where mucin is produced.

Its subcellular location is the golgi apparatus membrane. It catalyses the reaction a 3-O-[beta-D-galactosyl-(1-&gt;3)-N-acetyl-alpha-D-galactosaminyl]-L-seryl-[protein] + UDP-N-acetyl-alpha-D-glucosamine = 3-O-{beta-D-galactosyl-(1-&gt;3)-[N-acetyl-beta-D-glucosaminyl-(1-&gt;6)]-N-acetyl-alpha-D-galactosaminyl}-L-seryl-[protein] + UDP + H(+). It carries out the reaction a 3-O-[beta-D-galactosyl-(1-&gt;3)-N-acetyl-alpha-D-galactosaminyl]-L-threonyl-[protein] + UDP-N-acetyl-alpha-D-glucosamine = a 3-O-{beta-D-galactosyl-(1-&gt;3)-[N-acetyl-beta-D-glucosaminyl-(1-&gt;6)]-N-acetyl-alpha-D-galactosaminyl}-L-threonyl-[protein] + UDP + H(+). The enzyme catalyses a beta-D-Gal-(1-&gt;4)-beta-D-GlcNAc-(1-&gt;3)-beta-D-Gal-(1-&gt;4)-beta-D-GlcNAc derivative + UDP-N-acetyl-alpha-D-glucosamine = a beta-D-Gal-(1-&gt;4)-beta-D-GlcNAc-(1-&gt;3)-[beta-D-GlcNAc-(1-&gt;6)]-beta-D-Gal-(1-&gt;4)-N-acetyl-beta-D-glucosaminyl derivative + UDP + H(+). The catalysed reaction is 3-O-[N-acetyl-beta-D-glucosaminyl-(1-&gt;3)-N-acetyl-alpha-D-galactosaminyl]-L-seryl-[protein] + UDP-N-acetyl-alpha-D-glucosamine = 3-O-[N-acetyl-beta-D-glucosaminyl-(1-&gt;3)-[N-acetyl-beta-D-glucosaminyl-(1-&gt;6)]-N-acetyl-alpha-D-galactosaminyl]-L-seryl-[protein] + UDP + H(+). It catalyses the reaction a 3-O-[N-acetyl-beta-D-glucosaminyl-(1-&gt;3)-N-acetyl-alpha-D-galactosaminyl]-L-threonyl-[protein] + UDP-N-acetyl-alpha-D-glucosamine = 3-O-[N-acetyl-beta-D-glucosaminyl-(1-&gt;3)-[N-acetyl-beta-D-glucosaminyl-(1-&gt;6)]-N-acetyl-alpha-D-galactosaminyl]-L-threonyl-[protein] + UDP + H(+). Its pathway is protein modification; protein glycosylation. Glycosyltransferase that can synthesize all known mucin beta 6 N-acetylglucosaminides. Mediates core 2 and core 4 O-glycan branching, 2 important steps in mucin-type biosynthesis. Also has I-branching enzyme activity by converting linear into branched poly-N-acetyllactosaminoglycans, leading to introduce the blood group I antigen during embryonic development. This chain is Beta-1,3-galactosyl-O-glycosyl-glycoprotein beta-1,6-N-acetylglucosaminyltransferase 3 (GCNT3), found in Homo sapiens (Human).